The primary structure comprises 351 residues: Outer membrane porin protein 32 (351 aa).

Positions 1 to 19 are cleaved as a signal peptide; it reads MKKSLIALAVLAASGAAMA. Glutamine 20 is subject to Pyrrolidone carboxylic acid.

To bacterial outer membrane proteins and porins. Homotrimer.

The protein resides in the cell outer membrane. Forms anion selective channels. This is Outer membrane porin protein 32 (omp32) from Delftia acidovorans (Pseudomonas acidovorans).